The primary structure comprises 234 residues: Octanoyltransferase (234 aa).

Residues 42 to 226 (PDTPDEFWVV…ELASLIGYET (185 aa)) enclose the BPL/LPL catalytic domain. Substrate is bound by residues 81–88 (RGGQVTYH), 157–159 (SLG), and 170–172 (GLA). Cys188 functions as the Acyl-thioester intermediate in the catalytic mechanism.

The protein belongs to the LipB family.

It localises to the cytoplasm. The catalysed reaction is octanoyl-[ACP] + L-lysyl-[protein] = N(6)-octanoyl-L-lysyl-[protein] + holo-[ACP] + H(+). It participates in protein modification; protein lipoylation via endogenous pathway; protein N(6)-(lipoyl)lysine from octanoyl-[acyl-carrier-protein]: step 1/2. In terms of biological role, catalyzes the transfer of endogenously produced octanoic acid from octanoyl-acyl-carrier-protein onto the lipoyl domains of lipoate-dependent enzymes. Lipoyl-ACP can also act as a substrate although octanoyl-ACP is likely to be the physiological substrate. The polypeptide is Octanoyltransferase (Aeromonas hydrophila subsp. hydrophila (strain ATCC 7966 / DSM 30187 / BCRC 13018 / CCUG 14551 / JCM 1027 / KCTC 2358 / NCIMB 9240 / NCTC 8049)).